The chain runs to 355 residues: Peptide chain release factor 1 (355 aa).

Q233 is modified (N5-methylglutamine). Residues K280 to R293 are compositionally biased toward basic and acidic residues. Residues K280–F310 are disordered.

It belongs to the prokaryotic/mitochondrial release factor family. Methylated by PrmC. Methylation increases the termination efficiency of RF1.

The protein resides in the cytoplasm. Its function is as follows. Peptide chain release factor 1 directs the termination of translation in response to the peptide chain termination codons UAG and UAA. In Rickettsia prowazekii (strain Madrid E), this protein is Peptide chain release factor 1 (prfA).